A 147-amino-acid chain; its full sequence is NADH-quinone oxidoreductase subunit A (147 aa).

The next 3 membrane-spanning stretches (helical) occupy residues Leu-13–Val-33, Tyr-70–Ala-90, and Val-104–Leu-124.

It belongs to the complex I subunit 3 family. In terms of assembly, NDH-1 is composed of 14 different subunits. Subunits NuoA, H, J, K, L, M, N constitute the membrane sector of the complex.

It is found in the cell inner membrane. The enzyme catalyses a quinone + NADH + 5 H(+)(in) = a quinol + NAD(+) + 4 H(+)(out). Its function is as follows. NDH-1 shuttles electrons from NADH, via FMN and iron-sulfur (Fe-S) centers, to quinones in the respiratory chain. The immediate electron acceptor for the enzyme in this species is believed to be ubiquinone. Couples the redox reaction to proton translocation (for every two electrons transferred, four hydrogen ions are translocated across the cytoplasmic membrane), and thus conserves the redox energy in a proton gradient. In Gluconacetobacter diazotrophicus (strain ATCC 49037 / DSM 5601 / CCUG 37298 / CIP 103539 / LMG 7603 / PAl5), this protein is NADH-quinone oxidoreductase subunit A.